The chain runs to 541 residues: Protein MGF 505-10R (541 aa).

The protein belongs to the asfivirus MGF 505 family.

Plays a role in virus cell tropism, and may be required for efficient virus replication in macrophages. The sequence is that of Protein MGF 505-10R from Ornithodoros (relapsing fever ticks).